The following is a 179-amino-acid chain: Large ribosomal subunit protein uL5 (179 aa).

It belongs to the universal ribosomal protein uL5 family. Part of the 50S ribosomal subunit; part of the 5S rRNA/L5/L18/L25 subcomplex. Contacts the 5S rRNA and the P site tRNA. Forms a bridge to the 30S subunit in the 70S ribosome.

Its function is as follows. This is one of the proteins that bind and probably mediate the attachment of the 5S RNA into the large ribosomal subunit, where it forms part of the central protuberance. In the 70S ribosome it contacts protein S13 of the 30S subunit (bridge B1b), connecting the 2 subunits; this bridge is implicated in subunit movement. Contacts the P site tRNA; the 5S rRNA and some of its associated proteins might help stabilize positioning of ribosome-bound tRNAs. In Halalkalibacterium halodurans (strain ATCC BAA-125 / DSM 18197 / FERM 7344 / JCM 9153 / C-125) (Bacillus halodurans), this protein is Large ribosomal subunit protein uL5.